The chain runs to 386 residues: Lipoyl synthase, mitochondrial (386 aa).

Residues 1-48 (MHGRRHLAASLTRALTQAPSRSISSTPSLLQTLDPSVPSPSPPPAAEP) form a disordered region. Residues 13–34 (RALTQAPSRSISSTPSLLQTLD) are compositionally biased toward polar residues. The segment covering 37-46 (VPSPSPPPAA) has biased composition (pro residues). The [4Fe-4S] cluster site is built by cysteine 113, cysteine 118, cysteine 124, cysteine 144, cysteine 148, cysteine 151, and serine 360. Residues 129 to 349 (ETGTATATIM…RALGVEMGFR (221 aa)) enclose the Radical SAM core domain.

This sequence belongs to the radical SAM superfamily. Lipoyl synthase family. Requires [4Fe-4S] cluster as cofactor.

The protein resides in the mitochondrion. The catalysed reaction is [[Fe-S] cluster scaffold protein carrying a second [4Fe-4S](2+) cluster] + N(6)-octanoyl-L-lysyl-[protein] + 2 oxidized [2Fe-2S]-[ferredoxin] + 2 S-adenosyl-L-methionine + 4 H(+) = [[Fe-S] cluster scaffold protein] + N(6)-[(R)-dihydrolipoyl]-L-lysyl-[protein] + 4 Fe(3+) + 2 hydrogen sulfide + 2 5'-deoxyadenosine + 2 L-methionine + 2 reduced [2Fe-2S]-[ferredoxin]. It functions in the pathway protein modification; protein lipoylation via endogenous pathway; protein N(6)-(lipoyl)lysine from octanoyl-[acyl-carrier-protein]: step 2/2. In terms of biological role, catalyzes the radical-mediated insertion of two sulfur atoms into the C-6 and C-8 positions of the octanoyl moiety bound to the lipoyl domains of lipoate-dependent enzymes, thereby converting the octanoylated domains into lipoylated derivatives. This chain is Lipoyl synthase, mitochondrial, found in Sorghum bicolor (Sorghum).